The following is a 355-amino-acid chain: Peptide chain release factor 1 (355 aa).

Q233 bears the N5-methylglutamine mark.

Belongs to the prokaryotic/mitochondrial release factor family. Post-translationally, methylated by PrmC. Methylation increases the termination efficiency of RF1.

Its subcellular location is the cytoplasm. Functionally, peptide chain release factor 1 directs the termination of translation in response to the peptide chain termination codons UAG and UAA. The protein is Peptide chain release factor 1 of Bacillus cytotoxicus (strain DSM 22905 / CIP 110041 / 391-98 / NVH 391-98).